The sequence spans 208 residues: Urease accessory protein UreG 1 (208 aa).

A GTP-binding site is contributed by 14 to 21 (GPVGSGKT).

It belongs to the SIMIBI class G3E GTPase family. UreG subfamily. As to quaternary structure, homodimer. UreD, UreF and UreG form a complex that acts as a GTP-hydrolysis-dependent molecular chaperone, activating the urease apoprotein by helping to assemble the nickel containing metallocenter of UreC. The UreE protein probably delivers the nickel.

The protein resides in the cytoplasm. Facilitates the functional incorporation of the urease nickel metallocenter. This process requires GTP hydrolysis, probably effectuated by UreG. The sequence is that of Urease accessory protein UreG 1 from Brucella ovis (strain ATCC 25840 / 63/290 / NCTC 10512).